A 623-amino-acid chain; its full sequence is MGDLPGSGSTAQPRDAAVTGTGGNSTAGGGSSVGSTAVDRPPSPARLSHTSEKHPKVTLTELNMLRRHRELCDVVLNVGGRKIFAHRVILSACSSYFCAMFTGELEESRQTEVTIRDIDENAMELLIDFCYTAHIMVEESNVQTLLPAACLLQLVEIQDICCEFLKRQLDPTNCLGIRAFADTHSCRELLRIADKFTQHNFQEVMESEEFLLLPVGQLVDIICSDELNVRSEEQVFNAVMSWLKYNVAERRQHLAQVLQHVRLPLLSPKFLVGTVGSDLLVRSDEACRDLVDEAKNYLLLPQERPLMQGPRTRPRKPTRRGEVLFAVGGWCSGDAIASVERFDPQTNDWKMVAPMSKRRCGVGVAVLNDLLYAVGGHDGQSYLNSIERYDPQTNQWSCDVAPTTSCRTSVGVAVLDGFLYAVGGQDGVQCLNHVERYDPKENKWSKVAPMTTRRLGVAVAVLGGFLYAIGGSDGQCPLNTVERYDPRHNKWVAVSPMSTRRKHLGCAVFNNYIYAVGGRDDCMELSSAERYNPLTNTWSPIVAMTSRRSGVGLAVVNGQLYAVGGFDGSAYLKTIEVYDPETNQWRLCGCMNYRRLGGGVGVMRAPQTENYMWCENSFKQPNS.

The interval 1–54 is disordered; sequence MGDLPGSGSTAQPRDAAVTGTGGNSTAGGGSSVGSTAVDRPPSPARLSHTSEKH. T19 is modified (phosphothreonine). Residues 20–32 are compositionally biased toward gly residues; sequence GTGGNSTAGGGSS. In terms of domain architecture, BTB spans 72–139; that stretch reads CDVVLNVGGR…CYTAHIMVEE (68 aa). The BACK domain occupies 174–276; that stretch reads CLGIRAFADT…SPKFLVGTVG (103 aa). 6 Kelch repeats span residues 323–369, 371–417, 418–464, 466–511, 513–558, and 559–605; these read VLFA…VLND, LYAV…VLDG, FLYA…VLGG, LYAI…VFNN, IYAV…VVNG, and QLYA…VMRA.

It participates in protein modification; protein ubiquitination. Functionally, probable substrate-specific adapter of an E3 ubiquitin-protein ligase complex which mediates the ubiquitination and subsequent proteasomal degradation of target proteins. May have a role in synapse differentiation and growth. This is Kelch-like protein diablo from Drosophila erecta (Fruit fly).